A 1184-amino-acid polypeptide reads, in one-letter code: Non-receptor tyrosine-protein kinase TYK2 (1184 aa).

An FERM domain is found at 33 to 430; that stretch reads LMVLLHWPGP…GYFRLTADSS (398 aa). Residues 294-368 are disordered; that stretch reads CYIQNSGQTA…KAGEHLTESP (75 aa). The residue at position 295 (Y295) is a Phosphotyrosine. The SH2; atypical domain maps to 449–529; the sequence is GIHGPLMDPF…GRSFASLGDL (81 aa). S525 carries the phosphoserine modification. Positions 589-866 constitute a Protein kinase 1 domain; it reads ITQLSHLGQG…RTILRDLTRL (278 aa). Y604 is modified (phosphotyrosine). Phosphoserine is present on S881. The Protein kinase 2 domain maps to 894 to 1166; sequence LKKIRDLGEG…PTFQNLVPIL (273 aa). ATP is bound by residues 900–908 and K927; that span reads LGEGHFGKV. The active-site Proton acceptor is D1020. Y1051 is subject to Phosphotyrosine; by autocatalysis. At Y1052 the chain carries Phosphotyrosine.

It belongs to the protein kinase superfamily. Tyr protein kinase family. JAK subfamily. As to quaternary structure, interacts (via FERM domain) with JAKMIP1. Interacts with PIK3R1; this interaction is important for cell migration. Interacts with MPL/TPOR. Phosphorylation by JAK1 at Tyr-1051 and Tyr-1052 induces kinase activation.

The enzyme catalyses L-tyrosyl-[protein] + ATP = O-phospho-L-tyrosyl-[protein] + ADP + H(+). With respect to regulation, the protein kinase 1 domain (also termed pseudokinase domain) mediates autoinhibition of the TYK2 kinase domain. In terms of biological role, tyrosine kinase of the non-receptor type involved in numerous cytokines and interferons signaling, which regulates cell growth, development, cell migration, innate and adaptive immunity. Plays both structural and catalytic roles in numerous interleukins and interferons (IFN-alpha/beta) signaling. Associates with heterodimeric cytokine receptor complexes and activates STAT family members including STAT1, STAT3, STAT4 or STAT6. The heterodimeric cytokine receptor complexes are composed of (1) a TYK2-associated receptor chain (IFNAR1, IL12RB1, IL10RB or IL13RA1), and (2) a second receptor chain associated either with JAK1 or JAK2. In response to cytokine-binding to receptors, phosphorylates and activates receptors (IFNAR1, IL12RB1, IL10RB or IL13RA1), creating docking sites for STAT members. In turn, recruited STATs are phosphorylated by TYK2 (or JAK1/JAK2 on the second receptor chain), form homo- and heterodimers, translocate to the nucleus, and regulate cytokine/growth factor responsive genes. Negatively regulates STAT3 activity by promototing phosphorylation at a specific tyrosine that differs from the site used for signaling. In Mus musculus (Mouse), this protein is Non-receptor tyrosine-protein kinase TYK2.